Consider the following 89-residue polypeptide: MNFSIFLFLIGILGFVLNRKNIILMLISIEIMLLSITFLILISSLSFDDILGQTFAVYIITVAGAESAIGLGILVAYYRLRGSISIQYR.

3 consecutive transmembrane segments (helical) span residues 1 to 21 (MNFS…NRKN), 22 to 42 (IILM…LILI), and 55 to 75 (FAVY…GILV).

The protein belongs to the complex I subunit 4L family.

It is found in the mitochondrion membrane. It catalyses the reaction a ubiquinone + NADH + 5 H(+)(in) = a ubiquinol + NAD(+) + 4 H(+)(out). In terms of biological role, core subunit of the mitochondrial membrane respiratory chain NADH dehydrogenase (Complex I) that is believed to belong to the minimal assembly required for catalysis. Complex I functions in the transfer of electrons from NADH to the respiratory chain. The immediate electron acceptor for the enzyme is believed to be ubiquinone. This chain is NADH-ubiquinone oxidoreductase chain 4L (nd4L), found in Aspergillus niger.